The chain runs to 240 residues: MDGFSALFVPSEPSVPGSQSVVPTCTGAFVSGKTQAQTPIPGPPPTLPSSSSVEDNSRRPAAGPFYLLRELPGLSDLTASINLILHYNLEHSFSKFCGKKVKEKLSNFLPDLPGMIDTPGTPDNSSLRSLIEKPPICGNAFTPLTGALLTGFRLHTGPLPEQCRLMHIQPPKKKNKKHKQSRTQEPAPPETPSDSDHRKKKKKQREDDPERRKKKKDKKKKKSRHSPEHPGAGSSQSGLR.

Disordered stretches follow at residues 32–58 (GKTQAQTPIPGPPPTLPSSSSVEDNSR) and 169–240 (QPPK…SGLR). 2 stretches are compositionally biased toward basic residues: residues 170-181 (PPKKKNKKHKQS) and 212-224 (RKKKKDKKKKKSR).

This sequence belongs to the Mediator complex subunit 19 family. In terms of assembly, component of the Mediator complex.

It localises to the nucleus. Component of the Mediator complex, a coactivator involved in the regulated transcription of nearly all RNA polymerase II-dependent genes. Mediator functions as a bridge to convey information from gene-specific regulatory proteins to the basal RNA polymerase II transcription machinery. Mediator is recruited to promoters by direct interactions with regulatory proteins and serves as a scaffold for the assembly of a functional preinitiation complex with RNA polymerase II and the general transcription factors. The chain is Mediator of RNA polymerase II transcription subunit 19 (med19) from Xenopus laevis (African clawed frog).